The sequence spans 123 residues: Omega-oxotoxin-Ot1a (123 aa).

Positions 1 to 16 (MKIVLVFVCTLYLAQA) are cleaved as a signal peptide. Residues 17 to 54 (TYLSEQDVNEVSEFLEALDQANEAASEMVEAAETEEAR) constitute a propeptide that is removed on maturation. Residues 55 to 122 (DWECLPLHSS…GKINTCDKYK (68 aa)) form the Oxytoxin-type inhibitor cystine knot (ICK) domain. Intrachain disulfides connect Cys-58-Cys-72, Cys-65-Cys-77, Cys-69-Cys-118, Cys-71-Cys-106, and Cys-79-Cys-104.

It belongs to the spiderine family. Spiderine subfamily. In terms of processing, mass spectrometry data suggest a carboxylated free C-terminal residue. In terms of tissue distribution, expressed by the venom gland.

The protein resides in the secreted. In terms of biological role, weak blocker of vertebrate P/Q-, N- and L-type voltage-gated calcium channels (Cav1 and Cav2). Is both paralytic and lethal when injected into lepidopteran larvae. Is not toxic to mice. The protein is Omega-oxotoxin-Ot1a of Oxyopes takobius (Lynx spider).